The chain runs to 704 residues: Zinc finger CCHC domain-containing protein 8 (704 aa).

An N-acetylalanine modification is found at Ala2. A compositionally biased stretch (basic and acidic residues) spans 16-33 (FDHPEESIPEPVHTRFKD). The interval 16–43 (FDHPEESIPEPVHTRFKDDDEEDENGVG) is disordered. Residues 43-78 (GDAELRERLRQCEETIEQLRAENQELKRKLNILTRP) are a coiled coil. The CCHC-type zinc finger occupies 225–242 (PHCFNCGSEEHQMKDCPM). RBM7 binding regions lie at residues 284 to 297 (FKPG…QDAL) and 307 to 322 (FIYR…GWLK). Thr340 carries the post-translational modification Phosphothreonine. Disordered stretches follow at residues 407–516 (APGV…LTLE) and 529–599 (LEQA…SPDC). Lys411 is covalently cross-linked (Glycyl lysine isopeptide (Lys-Gly) (interchain with G-Cter in SUMO2)). The segment covering 454-463 (SQSSESFQFQ) has biased composition (low complexity). Pro residues predominate over residues 464–494 (PPLPPDTPPLPRGTPPPIFTPPLPKGTPPLT). Residues Thr470, Thr477, Thr483, and Thr490 each carry the phosphothreonine modification. A coiled-coil region spans residues 514-538 (TLEELEEQQRRIWAALEQAESLNSD). A compositionally biased stretch (polar residues) spans 547 to 557 (LTGNSVASSPC). Residue Thr575 is modified to Phosphothreonine. Ser596 carries the phosphoserine modification. At Thr645 the chain carries Phosphothreonine. Ser646, Ser655, and Ser692 each carry phosphoserine. Residues 656–704 (PIPDMSKFATGITPFEFENMAESTGMYLRIRSLLKNSPRNQQKNKKASE) are MTREX binding.

Belongs to the ZCCHC8 family. In terms of assembly, component of a nuclear TRAMP-like complex, an ATP-dependent exosome regulatory complex consisting of a helicase (MTREX), an oligadenylate polymerase (TENT4B or TENT4A), and a substrate specific RNA-binding factor (ZCCHC7 or ZCCHC8). Several TRAMP-like complexes exist with specific compositions and are associated with nuclear, or nucleolar RNA exosomes. Identified in the spliceosome C complex. Component of the nuclear exosome targeting (NEXT) complex composed of MTREX, ZCCHC8, and RBM7 that directs a subset of non-coding short-lived RNAs for exosomal degradation. Interacts with proteins involved in RNA processing and degradation such as MTREX and RBM7; interaction with MTREX enhances MTREX RNA helicase activity and bridges between RBM7 and MTREX. Interacts with TERC, the telomerase RNA component. In terms of processing, phosphorylation at Thr-490 by GSK3 is triggered in cells entering mitosis.

The protein resides in the nucleus. It is found in the nucleoplasm. In terms of biological role, scaffolding subunit of the trimeric nuclear exosome targeting (NEXT) complex that is involved in the surveillance and turnover of aberrant transcripts and non-coding RNAs. NEXT functions as an RNA exosome cofactor that directs a subset of non-coding short-lived RNAs for exosomal degradation. May be involved in pre-mRNA splicing. It is required for 3'-end maturation of telomerase RNA component (TERC), TERC 3'-end targeting to the nuclear RNA exosome, and for telomerase function. The chain is Zinc finger CCHC domain-containing protein 8 (ZCCHC8) from Pongo abelii (Sumatran orangutan).